The sequence spans 68 residues: Large ribosomal subunit protein bL31 (68 aa).

Residues cysteine 16, cysteine 18, cysteine 37, and cysteine 40 each contribute to the Zn(2+) site.

It belongs to the bacterial ribosomal protein bL31 family. Type A subfamily. Part of the 50S ribosomal subunit. It depends on Zn(2+) as a cofactor.

Binds the 23S rRNA. The polypeptide is Large ribosomal subunit protein bL31 (Acidithiobacillus ferrooxidans (strain ATCC 23270 / DSM 14882 / CIP 104768 / NCIMB 8455) (Ferrobacillus ferrooxidans (strain ATCC 23270))).